Reading from the N-terminus, the 541-residue chain is Protein wntless homolog B (541 aa).

Topologically, residues 1-15 (MAGAIIENMSTKKLC) are cytoplasmic. Residues 16–36 (MVGVALLLLQVLAFLVGGLIA) traverse the membrane as a helical segment. Over 37–232 (PKPTTYVNPV…SIFQNGGFTM (196 aa)) the chain is Lumenal. The helical transmembrane segment at 233–253 (VWFAMKTFLTPCIIIIMIWYW) threads the bilayer. Over 254-268 (RRITMMTRSPVLLEK) the chain is Cytoplasmic. A helical transmembrane segment spans residues 269–289 (VIFALGISMTFINIPVEWFSI). Residues 290 to 303 (GYDWTWMLLFGDIR) are Lumenal-facing. The helical transmembrane segment at 304-324 (QGIFYAMLLSFWIIFCGEHMM) threads the bilayer. The Cytoplasmic portion of the chain corresponds to 325–331 (DQAERNR). A helical membrane pass occupies residues 332-352 (ISIYWKQVGPIAFGSCCLFIF). Over 353-379 (DMCERGVQLKNPFYSIWTTDVGAEIAM) the chain is Lumenal. The helical transmembrane segment at 380-400 (AFIIVAGICACLYFLFLCFMV) threads the bilayer. At 401 to 431 (YQVFRNISGKRSNLPAMSKARRLHYEGLIFR) the chain is on the cytoplasmic side. Residues 432-452 (FKFLMIITLACAALTVVFFIT) form a helical membrane-spanning segment. Residues 453–471 (TQITEGNWKLGDLSIELNS) lie on the Lumenal side of the membrane. The helical transmembrane segment at 472–492 (AFFTGIYGMWNLYVFALMFLY) threads the bilayer. Over 493–541 (APSHKHYGDGQSNDGAGMSSGEELQLTTTITHIDGPTELYRLAGKEAQE) the chain is Cytoplasmic.

Belongs to the wntless family. As to expression, enriched in the animal hemisphere of the early cleavage embryo, where expression persists until the late gastrula stage. At the neurula stage, strongly expressed at the border of the neural plate and dorsal midline. After the neurula stage, expressed in various organs, including the eye, liver, heart, pronephros, otic vesicle, and dorsal neural tube. Expression in the developing eye is dynamic; expressed in the eye field from stages 23 to 27, and from stage 30 expression is confined to distinct regions including the central part and border of the eye.

The protein resides in the golgi apparatus membrane. Its subcellular location is the cytoplasmic vesicle membrane. Functionally, required for a subset of Wnt-dependent developmental processes, in particular, eye and pronephros development. Regulates the secretion of wnt4, which is required for eye development. This Xenopus laevis (African clawed frog) protein is Protein wntless homolog B (wls-b).